A 229-amino-acid polypeptide reads, in one-letter code: Uracil-DNA glycosylase (229 aa).

Residue aspartate 67 is the Proton acceptor of the active site.

The protein belongs to the uracil-DNA glycosylase (UDG) superfamily. UNG family.

Its subcellular location is the cytoplasm. The enzyme catalyses Hydrolyzes single-stranded DNA or mismatched double-stranded DNA and polynucleotides, releasing free uracil.. Functionally, excises uracil residues from the DNA which can arise as a result of misincorporation of dUMP residues by DNA polymerase or due to deamination of cytosine. This is Uracil-DNA glycosylase from Coxiella burnetii (strain CbuG_Q212) (Coxiella burnetii (strain Q212)).